The chain runs to 184 residues: FMRFamide-related peptides (184 aa).

The propeptide occupies 1–44 (MLVSSSVLKDDSSLRIFKESPNEFEYIIKRHDMDDRKEDTESKE). F56 bears the Phenylalanine amide mark. The propeptide occupies 59–83 (GQSFFNNLDNSAFDNEIDSKVSRHP). Phenylalanine amide is present on F94. Residues 97-107 (SGMKSTNDEQP) constitute a propeptide that is removed on maturation. F119 bears the Phenylalanine amide mark. A propeptide spanning residues 122 to 184 (NIQIVPTDFD…SLETNSNHRE (63 aa)) is cleaved from the precursor.

Belongs to the FARP (FMRFamide related peptide) family. As to expression, expressed throughout the central nervous system.

It is found in the secreted. In terms of biological role, in insects, FMRFamide and related peptides have modulatory actions at skeletal neuromuscular junctions, and peptides that are immunologically related to FMRFamide are released into the circulation from neurohemal organs. In Camponotus floridanus (Florida carpenter ant), this protein is FMRFamide-related peptides.